The chain runs to 108 residues: Nucleoid-associated protein BQ02190 (108 aa).

It belongs to the YbaB/EbfC family. Homodimer.

It localises to the cytoplasm. The protein resides in the nucleoid. Binds to DNA and alters its conformation. May be involved in regulation of gene expression, nucleoid organization and DNA protection. In Bartonella quintana (strain Toulouse) (Rochalimaea quintana), this protein is Nucleoid-associated protein BQ02190.